The following is a 492-amino-acid chain: Probable cytosol aminopeptidase (492 aa).

Mn(2+) is bound by residues K259 and D264. The active site involves K271. The Mn(2+) site is built by D283, D342, and E344. R346 is an active-site residue.

Belongs to the peptidase M17 family. It depends on Mn(2+) as a cofactor.

It localises to the cytoplasm. It carries out the reaction Release of an N-terminal amino acid, Xaa-|-Yaa-, in which Xaa is preferably Leu, but may be other amino acids including Pro although not Arg or Lys, and Yaa may be Pro. Amino acid amides and methyl esters are also readily hydrolyzed, but rates on arylamides are exceedingly low.. The catalysed reaction is Release of an N-terminal amino acid, preferentially leucine, but not glutamic or aspartic acids.. In terms of biological role, presumably involved in the processing and regular turnover of intracellular proteins. Catalyzes the removal of unsubstituted N-terminal amino acids from various peptides. This chain is Probable cytosol aminopeptidase (pepA), found in Synechocystis sp. (strain ATCC 27184 / PCC 6803 / Kazusa).